The primary structure comprises 211 residues: MVFLKFFCMSFFCHLCQGYFDGPLYPEMSNGTLHHYFVPDGDYEENDDPEKCQLLFRVSDHRRCSQGEGSQVGSLLSLTLREEFTVLGRQVEDAGRVLEGISKSISYDLDGEESYGKYLRRESHQIGDAYSNSDKSLTELESKFKQGQEQDSRQESRLNEDFLGMLVHTRSLLKETLDISVGLRDKYELLALTIRSHGTRLGRLKNDYLKV.

The signal sequence occupies residues 1–18; the sequence is MVFLKFFCMSFFCHLCQG. An N-linked (GlcNAc...) asparagine glycan is attached at Asn-30.

The protein belongs to the FIBIN family. As to quaternary structure, homodimer; disulfide-linked. Seems to also exist as monomers.

Its subcellular location is the secreted. The protein resides in the golgi apparatus. It localises to the endoplasmic reticulum. This is Fin bud initiation factor homolog (FIBIN) from Homo sapiens (Human).